We begin with the raw amino-acid sequence, 475 residues long: Kynureninase (475 aa).

Pyridoxal 5'-phosphate-binding positions include leucine 141, threonine 142, 169 to 172, aspartate 254, histidine 257, and tyrosine 279; that span reads FPSD. Lysine 280 is subject to N6-(pyridoxal phosphate)lysine. Positions 319 and 347 each coordinate pyridoxal 5'-phosphate.

The protein belongs to the kynureninase family. As to quaternary structure, homodimer. Pyridoxal 5'-phosphate is required as a cofactor.

Its subcellular location is the cytoplasm. It catalyses the reaction L-kynurenine + H2O = anthranilate + L-alanine + H(+). It carries out the reaction 3-hydroxy-L-kynurenine + H2O = 3-hydroxyanthranilate + L-alanine + H(+). Its pathway is amino-acid degradation; L-kynurenine degradation; L-alanine and anthranilate from L-kynurenine: step 1/1. The protein operates within cofactor biosynthesis; NAD(+) biosynthesis; quinolinate from L-kynurenine: step 2/3. In terms of biological role, catalyzes the cleavage of L-kynurenine (L-Kyn) and L-3-hydroxykynurenine (L-3OHKyn) into anthranilic acid (AA) and 3-hydroxyanthranilic acid (3-OHAA), respectively. This is Kynureninase (bna5) from Sclerotinia sclerotiorum (strain ATCC 18683 / 1980 / Ss-1) (White mold).